Here is a 777-residue protein sequence, read N- to C-terminus: Zinc finger protein 786 (777 aa).

Residues 9-80 (LTFEDVAIYF…WGEKKKPDKE (72 aa)) form the KRAB domain. The segment at 194-216 (NSCPVCRENSWEKNHLVKQQKGH) adopts a C2H2-type 1; degenerate zinc-finger fold. Residues 240 to 262 (ISCLGCGKSFRLKQYLVRHLDIH) form a C2H2-type 2 zinc finger. Residues 268–291 (PQCPKCKMCFHHERTLFSHHLKNS) form a C2H2-type 3; degenerate zinc finger. The C2H2-type 4; degenerate zinc-finger motif lies at 420–442 (VFCRKCGQGFTKHCGLTEHTRIL). 11 consecutive C2H2-type zinc fingers follow at residues 448–470 (FWCA…QRLH), 476–498 (FQCT…QLQH), 504–526 (FSCS…LRVH), 532–554 (FQCP…QRIH), 560–582 (FSCG…FRVH), 588–610 (FQCP…QRLH), 616–638 (FQCP…QLLH), 644–665 (FSCQ…MRTH), 671–693 (FQCP…QGLH), 699–721 (FHCP…QRIH), and 727–749 (FACG…IRVH).

It belongs to the krueppel C2H2-type zinc-finger protein family.

It is found in the nucleus. In terms of biological role, may be involved in transcriptional regulation. The sequence is that of Zinc finger protein 786 (Znf786) from Mus musculus (Mouse).